A 957-amino-acid chain; its full sequence is Bifunctional glutamine synthetase adenylyltransferase/adenylyl-removing enzyme (957 aa).

The segment at 1–447 (MFSQLDFTGL…IFNQLIGEEE (447 aa)) is adenylyl removase. The adenylyl transferase stretch occupies residues 454-957 (VNEQLAIWQD…IWQQIFTDNE (504 aa)).

The protein belongs to the GlnE family. Mg(2+) serves as cofactor.

The catalysed reaction is [glutamine synthetase]-O(4)-(5'-adenylyl)-L-tyrosine + phosphate = [glutamine synthetase]-L-tyrosine + ADP. The enzyme catalyses [glutamine synthetase]-L-tyrosine + ATP = [glutamine synthetase]-O(4)-(5'-adenylyl)-L-tyrosine + diphosphate. Its function is as follows. Involved in the regulation of glutamine synthetase GlnA, a key enzyme in the process to assimilate ammonia. When cellular nitrogen levels are high, the C-terminal adenylyl transferase (AT) inactivates GlnA by covalent transfer of an adenylyl group from ATP to specific tyrosine residue of GlnA, thus reducing its activity. Conversely, when nitrogen levels are low, the N-terminal adenylyl removase (AR) activates GlnA by removing the adenylyl group by phosphorolysis, increasing its activity. The regulatory region of GlnE binds the signal transduction protein PII (GlnB) which indicates the nitrogen status of the cell. The sequence is that of Bifunctional glutamine synthetase adenylyltransferase/adenylyl-removing enzyme from Haemophilus ducreyi (strain 35000HP / ATCC 700724).